Here is a 624-residue protein sequence, read N- to C-terminus: Chaperone protein HtpG (624 aa).

An a; substrate-binding region spans residues 1 to 336 (MKTQKKEVYN…SSDLPLNISR (336 aa)). The segment at 337-552 (EILQDNSITE…STEMTTQMAK (216 aa)) is b. Positions 553 to 624 (LFSAAGQSVP…ISRMNKLLIK (72 aa)) are c.

It belongs to the heat shock protein 90 family. Homodimer.

The protein resides in the cytoplasm. Its function is as follows. Molecular chaperone. Has ATPase activity. This Buchnera aphidicola subsp. Acyrthosiphon pisum (strain APS) (Acyrthosiphon pisum symbiotic bacterium) protein is Chaperone protein HtpG.